The sequence spans 107 residues: MAESHRLYVKGKHISYQRSKSVTNPNVSLIQIEGVASPKDAKFYLGKRIAYVYRAPKEIRGSKIRVIWGKVTRTHGNNGLVRANFKKNLPPKTFGASVRIMLYPSNI.

This sequence belongs to the eukaryotic ribosomal protein eL33 family. Component of the large ribosomal subunit. Mature ribosomes consist of a small (40S) and a large (60S) subunit. The 40S subunit contains about 32 different proteins and 1 molecule of RNA (18S). The 60S subunit contains 45 different proteins and 3 molecules of RNA (25S, 5.8S and 5S).

The protein resides in the cytoplasm. Its function is as follows. Component of the ribosome, a large ribonucleoprotein complex responsible for the synthesis of proteins in the cell. The small ribosomal subunit (SSU) binds messenger RNAs (mRNAs) and translates the encoded message by selecting cognate aminoacyl-transfer RNA (tRNA) molecules. The large subunit (LSU) contains the ribosomal catalytic site termed the peptidyl transferase center (PTC), which catalyzes the formation of peptide bonds, thereby polymerizing the amino acids delivered by tRNAs into a polypeptide chain. The nascent polypeptides leave the ribosome through a tunnel in the LSU and interact with protein factors that function in enzymatic processing, targeting, and the membrane insertion of nascent chains at the exit of the ribosomal tunnel. The chain is Large ribosomal subunit protein eL33 from Candida albicans (strain SC5314 / ATCC MYA-2876) (Yeast).